The following is a 172-amino-acid chain: 3-hydroxydecanoyl-[acyl-carrier-protein] dehydratase (172 aa).

His71 is an active-site residue.

This sequence belongs to the thioester dehydratase family. FabA subfamily. Homodimer.

The protein resides in the cytoplasm. It catalyses the reaction a (3R)-hydroxyacyl-[ACP] = a (2E)-enoyl-[ACP] + H2O. The enzyme catalyses (3R)-hydroxydecanoyl-[ACP] = (2E)-decenoyl-[ACP] + H2O. It carries out the reaction (2E)-decenoyl-[ACP] = (3Z)-decenoyl-[ACP]. Its pathway is lipid metabolism; fatty acid biosynthesis. Functionally, necessary for the introduction of cis unsaturation into fatty acids. Catalyzes the dehydration of (3R)-3-hydroxydecanoyl-ACP to E-(2)-decenoyl-ACP and then its isomerization to Z-(3)-decenoyl-ACP. Can catalyze the dehydratase reaction for beta-hydroxyacyl-ACPs with saturated chain lengths up to 16:0, being most active on intermediate chain length. In Escherichia coli O127:H6 (strain E2348/69 / EPEC), this protein is 3-hydroxydecanoyl-[acyl-carrier-protein] dehydratase.